Consider the following 343-residue polypeptide: Fructose-1,6-bisphosphatase class 1 (343 aa).

E91, D113, I115, and D116 together coordinate Mg(2+). Substrate contacts are provided by residues 116–119 (DGSS), N210, and K276. E282 lines the Mg(2+) pocket.

It belongs to the FBPase class 1 family. Homotetramer. Mg(2+) serves as cofactor.

Its subcellular location is the cytoplasm. It carries out the reaction beta-D-fructose 1,6-bisphosphate + H2O = beta-D-fructose 6-phosphate + phosphate. The protein operates within carbohydrate biosynthesis; gluconeogenesis. The protein is Fructose-1,6-bisphosphatase class 1 of Parvibaculum lavamentivorans (strain DS-1 / DSM 13023 / NCIMB 13966).